The primary structure comprises 84 residues: MKKVLIAPIKFYQKFISPIFPASCRYRPTCSAYMIEAIEKHGLKGFLMGIARILRCHPFVEGGEDPVPNHFTLRRNKKEKPSKS.

The interval 63–84 (GEDPVPNHFTLRRNKKEKPSKS) is disordered.

It belongs to the UPF0161 family.

It localises to the cell membrane. Its function is as follows. Could be involved in insertion of integral membrane proteins into the membrane. This is Putative membrane protein insertion efficiency factor from Streptococcus mutans serotype c (strain ATCC 700610 / UA159).